The chain runs to 460 residues: Serine--tRNA ligase (460 aa).

A compositionally biased stretch (basic and acidic residues) spans 43-66; that stretch reads AEGDGLRQERNEVSSKIGELKQDG. Residues 43–81 are disordered; it reads AEGDGLRQERNEVSSKIGELKQDGKDEEAQEAIDRSQEL. An L-serine-binding site is contributed by 242-244; that stretch reads TAE. Residues 273 to 275 and Val-289 each bind ATP; that span reads RRE. Glu-296 lines the L-serine pocket. Residue 369–372 participates in ATP binding; it reads EVSS. Position 405 (Ser-405) interacts with L-serine.

This sequence belongs to the class-II aminoacyl-tRNA synthetase family. Type-1 seryl-tRNA synthetase subfamily. As to quaternary structure, homodimer. The tRNA molecule binds across the dimer.

It localises to the cytoplasm. The enzyme catalyses tRNA(Ser) + L-serine + ATP = L-seryl-tRNA(Ser) + AMP + diphosphate + H(+). It carries out the reaction tRNA(Sec) + L-serine + ATP = L-seryl-tRNA(Sec) + AMP + diphosphate + H(+). The protein operates within aminoacyl-tRNA biosynthesis; selenocysteinyl-tRNA(Sec) biosynthesis; L-seryl-tRNA(Sec) from L-serine and tRNA(Sec): step 1/1. In terms of biological role, catalyzes the attachment of serine to tRNA(Ser). Is also probably able to aminoacylate tRNA(Sec) with serine, to form the misacylated tRNA L-seryl-tRNA(Sec), which will be further converted into selenocysteinyl-tRNA(Sec). The protein is Serine--tRNA ligase (serS) of Haloarcula marismortui (strain ATCC 43049 / DSM 3752 / JCM 8966 / VKM B-1809) (Halobacterium marismortui).